Here is a 728-residue protein sequence, read N- to C-terminus: Procollagen-lysine,2-oxoglutarate 5-dioxygenase 1 (728 aa).

A signal peptide spans 1–18 (MRSLLLLAPLAWLLLVQA). N-linked (GlcNAc...) asparagine glycans are attached at residues asparagine 198 and asparagine 539. In terms of domain architecture, Fe2OG dioxygenase spans 637-728 (QFDLAFVVRY…RYIAVSFVDP (92 aa)). Fe cation contacts are provided by histidine 657 and aspartate 659. Asparagine 687 is a glycosylation site (N-linked (GlcNAc...) asparagine). Position 709 (histidine 709) interacts with Fe cation. Arginine 719 is a catalytic residue.

Homodimer. Identified in a complex with P3H3 and P3H4. Fe(2+) is required as a cofactor. The cofactor is L-ascorbate. As to expression, highly expressed in the liver, heart, lung, skeletal muscle and kidney.

The protein resides in the rough endoplasmic reticulum membrane. The catalysed reaction is L-lysyl-[collagen] + 2-oxoglutarate + O2 = (5R)-5-hydroxy-L-lysyl-[collagen] + succinate + CO2. In terms of biological role, part of a complex composed of PLOD1, P3H3 and P3H4 that catalyzes hydroxylation of lysine residues in collagen alpha chains and is required for normal assembly and cross-linkling of collagen fibrils. Forms hydroxylysine residues in -Xaa-Lys-Gly- sequences in collagens. These hydroxylysines serve as sites of attachment for carbohydrate units and are essential for the stability of the intermolecular collagen cross-links. The chain is Procollagen-lysine,2-oxoglutarate 5-dioxygenase 1 (Plod1) from Mus musculus (Mouse).